A 197-amino-acid chain; its full sequence is Segregation and condensation protein B (197 aa).

Belongs to the ScpB family. In terms of assembly, homodimer. Homodimerization may be required to stabilize the binding of ScpA to the Smc head domains. Component of a cohesin-like complex composed of ScpA, ScpB and the Smc homodimer, in which ScpA and ScpB bind to the head domain of Smc. The presence of the three proteins is required for the association of the complex with DNA.

The protein resides in the cytoplasm. Participates in chromosomal partition during cell division. May act via the formation of a condensin-like complex containing Smc and ScpA that pull DNA away from mid-cell into both cell halves. This chain is Segregation and condensation protein B, found in Syntrophotalea carbinolica (strain DSM 2380 / NBRC 103641 / GraBd1) (Pelobacter carbinolicus).